A 754-amino-acid polypeptide reads, in one-letter code: Phosphoribosylformylglycinamidine synthase subunit PurL (754 aa).

The tract at residues 1–21 (MLDTVEHAATTPDQPQPYGEL) is disordered. The active site involves histidine 54. Residues tyrosine 57 and lysine 101 each coordinate ATP. Glutamate 103 is a Mg(2+) binding site. Residues 104–107 (SHNH) and arginine 126 contribute to the substrate site. Catalysis depends on histidine 105, which acts as the Proton acceptor. Aspartate 127 contacts Mg(2+). Substrate is bound at residue glutamine 252. Aspartate 280 serves as a coordination point for Mg(2+). Position 324–326 (324–326 (ESQ)) interacts with substrate. The ATP site is built by asparagine 512 and glycine 549. Asparagine 550 lines the Mg(2+) pocket. Serine 552 serves as a coordination point for substrate.

This sequence belongs to the FGAMS family. In terms of assembly, monomer. Part of the FGAM synthase complex composed of 1 PurL, 1 PurQ and 2 PurS subunits.

It is found in the cytoplasm. The catalysed reaction is N(2)-formyl-N(1)-(5-phospho-beta-D-ribosyl)glycinamide + L-glutamine + ATP + H2O = 2-formamido-N(1)-(5-O-phospho-beta-D-ribosyl)acetamidine + L-glutamate + ADP + phosphate + H(+). The protein operates within purine metabolism; IMP biosynthesis via de novo pathway; 5-amino-1-(5-phospho-D-ribosyl)imidazole from N(2)-formyl-N(1)-(5-phospho-D-ribosyl)glycinamide: step 1/2. In terms of biological role, part of the phosphoribosylformylglycinamidine synthase complex involved in the purines biosynthetic pathway. Catalyzes the ATP-dependent conversion of formylglycinamide ribonucleotide (FGAR) and glutamine to yield formylglycinamidine ribonucleotide (FGAM) and glutamate. The FGAM synthase complex is composed of three subunits. PurQ produces an ammonia molecule by converting glutamine to glutamate. PurL transfers the ammonia molecule to FGAR to form FGAM in an ATP-dependent manner. PurS interacts with PurQ and PurL and is thought to assist in the transfer of the ammonia molecule from PurQ to PurL. This is Phosphoribosylformylglycinamidine synthase subunit PurL from Mycobacterium bovis (strain ATCC BAA-935 / AF2122/97).